A 306-amino-acid polypeptide reads, in one-letter code: Porphobilinogen deaminase (306 aa).

At Cys-234 the chain carries S-(dipyrrolylmethanemethyl)cysteine.

Belongs to the HMBS family. Monomer. It depends on dipyrromethane as a cofactor.

The enzyme catalyses 4 porphobilinogen + H2O = hydroxymethylbilane + 4 NH4(+). It functions in the pathway porphyrin-containing compound metabolism; protoporphyrin-IX biosynthesis; coproporphyrinogen-III from 5-aminolevulinate: step 2/4. Tetrapolymerization of the monopyrrole PBG into the hydroxymethylbilane pre-uroporphyrinogen in several discrete steps. The chain is Porphobilinogen deaminase from Mycobacteroides abscessus (strain ATCC 19977 / DSM 44196 / CCUG 20993 / CIP 104536 / JCM 13569 / NCTC 13031 / TMC 1543 / L948) (Mycobacterium abscessus).